Consider the following 115-residue polypeptide: Putative TGFB1-induced anti-apoptotic factor 1 (115 aa).

In terms of tissue distribution, not detectable in normal kidney and liver. Up-regulated in chronic and acute allograft rejection: expressed in the inflammatory infiltrate and in tubular epithelial cells.

Its subcellular location is the nucleus. Functionally, inhibits the cytotoxic effects of TNF-alpha and overexpressed TNF receptor adapters TRADD, FADD, and RIPK1. Involved in TGF-beta1 inhibition of IkappaB-alpha expression and suppression of TNF-mediated IkappaB-alpha degradation. The chain is Putative TGFB1-induced anti-apoptotic factor 1 (MYO18A) from Homo sapiens (Human).